The chain runs to 342 residues: Eukaryotic translation initiation factor 3 subunit F (342 aa).

One can recognise an MPN domain in the interval 30–166; it reads VAIQPQAVFS…SRTYISAPIG (137 aa). The disordered stretch occupies residues 310–342; the sequence is TDALAGDGQKDGGDRKQGGDRRNKGRQQRTQEA. Residues 317–331 are compositionally biased toward basic and acidic residues; sequence GQKDGGDRKQGGDRR.

It belongs to the eIF-3 subunit F family. Component of the eukaryotic translation initiation factor 3 (eIF-3) complex.

Its subcellular location is the cytoplasm. Component of the eukaryotic translation initiation factor 3 (eIF-3) complex, which is involved in protein synthesis of a specialized repertoire of mRNAs and, together with other initiation factors, stimulates binding of mRNA and methionyl-tRNAi to the 40S ribosome. The eIF-3 complex specifically targets and initiates translation of a subset of mRNAs involved in cell proliferation. In Phaeosphaeria nodorum (strain SN15 / ATCC MYA-4574 / FGSC 10173) (Glume blotch fungus), this protein is Eukaryotic translation initiation factor 3 subunit F.